A 62-amino-acid chain; its full sequence is Pelophylaxin-4 (62 aa).

Positions 1–22 are cleaved as a signal peptide; it reads MLTLKKSMLLIFFLGTINFSLC. A propeptide spanning residues 23–45 is cleaved from the precursor; it reads EQERNADEEERRDEPEERDVEVQ. Leu-60 carries the post-translational modification Leucine amide. A propeptide is located at residue Gly-61.

Expressed by the skin glands.

Its subcellular location is the secreted. Antimicrobial peptide. The sequence is that of Pelophylaxin-4 from Pelophylax fukienensis (Fukien gold-striped pond frog).